The primary structure comprises 388 residues: Putative C-&gt;U-editing enzyme APOBEC-4 (388 aa).

The region spanning 60 to 176 (PQTKHLTFYE…AWNREALRGL (117 aa)) is the CMP/dCMP-type deaminase domain. His92 provides a ligand contact to Zn(2+). The active-site Proton donor is Glu94. Zn(2+) contacts are provided by Cys126 and Cys133. Residues 322–356 (KVKALRKSPSGRPVKKEEARKGSTRSQEANETNKS) are disordered.

The protein belongs to the cytidine and deoxycytidylate deaminase family. The cofactor is Zn(2+).

Its function is as follows. Putative C to U editing enzyme whose physiological substrate is not yet known. The sequence is that of Putative C-&gt;U-editing enzyme APOBEC-4 (Apobec4) from Rattus norvegicus (Rat).